A 526-amino-acid polypeptide reads, in one-letter code: Cholesterol side-chain cleavage enzyme, mitochondrial (526 aa).

The transit peptide at 1-36 (MLAKGLSLRSVLVKGCQPFLSPTWQGPVLSTGKGAG) directs the protein to the mitochondrion. Over residues 30-41 (STGKGAGTSTSS) the composition is skewed to low complexity. Residues 30 to 49 (STGKGAGTSTSSPRSFNEIP) form a disordered region. Residue Cys458 coordinates heme.

This sequence belongs to the cytochrome P450 family. In terms of assembly, interacts with FDX1/adrenodoxin. It depends on heme as a cofactor.

It is found in the mitochondrion inner membrane. It carries out the reaction 6 reduced [adrenodoxin] + cholesterol + 3 O2 + 6 H(+) = 4-methylpentanal + pregnenolone + 6 oxidized [adrenodoxin] + 4 H2O. It catalyses the reaction 2 reduced [adrenodoxin] + cholesterol + O2 + 2 H(+) = (22R)-hydroxycholesterol + 2 oxidized [adrenodoxin] + H2O. The enzyme catalyses (22R)-hydroxycholesterol + 2 reduced [adrenodoxin] + O2 + 2 H(+) = (20R,22R)-20,22-dihydroxycholesterol + 2 oxidized [adrenodoxin] + H2O. The catalysed reaction is (20R,22R)-20,22-dihydroxycholesterol + 2 reduced [adrenodoxin] + O2 + 2 H(+) = 4-methylpentanal + pregnenolone + 2 oxidized [adrenodoxin] + 2 H2O. It participates in lipid metabolism; C21-steroid hormone metabolism. It functions in the pathway steroid metabolism; cholesterol metabolism. Its function is as follows. A cytochrome P450 monooxygenase that catalyzes the side-chain hydroxylation and cleavage of cholesterol to pregnenolone, the precursor of most steroid hormones. Catalyzes three sequential oxidation reactions of cholesterol, namely the hydroxylation at C22 followed with the hydroxylation at C20 to yield 20R,22R-hydroxycholesterol that is further cleaved between C20 and C22 to yield the C21-steroid pregnenolone and 4-methylpentanal. Mechanistically, uses molecular oxygen inserting one oxygen atom into a substrate and reducing the second into a water molecule. Two electrons are provided by NADPH via a two-protein mitochondrial transfer system comprising flavoprotein FDXR (adrenodoxin/ferredoxin reductase) and nonheme iron-sulfur protein FDX1 or FDX2 (adrenodoxin/ferredoxin). This chain is Cholesterol side-chain cleavage enzyme, mitochondrial, found in Mus musculus (Mouse).